Here is a 173-residue protein sequence, read N- to C-terminus: dCTP deaminase, dUMP-forming (173 aa).

Residues 93–98 (RSSIGR), D111, 119–121 (TLE), and Q138 contribute to the dCTP site. E121 acts as the Proton donor/acceptor in catalysis.

It belongs to the dCTP deaminase family. Homotrimer.

It carries out the reaction dCTP + 2 H2O = dUMP + NH4(+) + diphosphate. It participates in pyrimidine metabolism; dUMP biosynthesis; dUMP from dCTP: step 1/1. Bifunctional enzyme that catalyzes both the deamination of dCTP to dUTP and the hydrolysis of dUTP to dUMP without releasing the toxic dUTP intermediate. This is dCTP deaminase, dUMP-forming from Leptospira interrogans serogroup Icterohaemorrhagiae serovar copenhageni (strain Fiocruz L1-130).